Here is a 98-residue protein sequence, read N- to C-terminus: NADH-ubiquinone oxidoreductase chain 4L (98 aa).

3 helical membrane-spanning segments follow: residues 1 to 21 (MSMV…GLLM), 29 to 49 (SLLC…VTIL), and 61 to 81 (IILL…LVMV).

The protein belongs to the complex I subunit 4L family. As to quaternary structure, core subunit of respiratory chain NADH dehydrogenase (Complex I) which is composed of 45 different subunits.

The protein localises to the mitochondrion inner membrane. The enzyme catalyses a ubiquinone + NADH + 5 H(+)(in) = a ubiquinol + NAD(+) + 4 H(+)(out). Core subunit of the mitochondrial membrane respiratory chain NADH dehydrogenase (Complex I) which catalyzes electron transfer from NADH through the respiratory chain, using ubiquinone as an electron acceptor. Part of the enzyme membrane arm which is embedded in the lipid bilayer and involved in proton translocation. The sequence is that of NADH-ubiquinone oxidoreductase chain 4L (MT-ND4L) from Halichoerus grypus (Gray seal).